A 429-amino-acid polypeptide reads, in one-letter code: Adenylosuccinate synthetase (429 aa).

Residues 12–18 (GDEGKGK) and 40–42 (GHT) each bind GTP. Aspartate 13 (proton acceptor) is an active-site residue. Mg(2+) is bound by residues aspartate 13 and glycine 40. Residues 13–16 (DEGK), 38–41 (NAGH), threonine 129, arginine 143, glutamine 223, threonine 238, and arginine 302 each bind IMP. Histidine 41 functions as the Proton donor in the catalytic mechanism. 298–304 (TVTGRRR) is a binding site for substrate. GTP contacts are provided by residues arginine 304, 330–332 (KLD), and 412–414 (STS).

It belongs to the adenylosuccinate synthetase family. Homodimer. Mg(2+) is required as a cofactor.

It is found in the cytoplasm. It carries out the reaction IMP + L-aspartate + GTP = N(6)-(1,2-dicarboxyethyl)-AMP + GDP + phosphate + 2 H(+). The protein operates within purine metabolism; AMP biosynthesis via de novo pathway; AMP from IMP: step 1/2. Its function is as follows. Plays an important role in the de novo pathway of purine nucleotide biosynthesis. Catalyzes the first committed step in the biosynthesis of AMP from IMP. The chain is Adenylosuccinate synthetase from Zymomonas mobilis subsp. mobilis (strain ATCC 31821 / ZM4 / CP4).